The primary structure comprises 452 residues: Chaperone SurA (452 aa).

The signal sequence occupies residues 1–28 (MKKTLRFAAVVSSLAASAALLVAAPAAA). PpiC domains follow at residues 186–288 (QQDL…RLVD) and 302–400 (IVQT…QVLN).

The protein resides in the periplasm. It carries out the reaction [protein]-peptidylproline (omega=180) = [protein]-peptidylproline (omega=0). Its function is as follows. Chaperone involved in the correct folding and assembly of outer membrane proteins. Recognizes specific patterns of aromatic residues and the orientation of their side chains, which are found more frequently in integral outer membrane proteins. May act in both early periplasmic and late outer membrane-associated steps of protein maturation. This is Chaperone SurA from Burkholderia orbicola (strain AU 1054).